An 81-amino-acid polypeptide reads, in one-letter code: Small ribosomal subunit protein uS17 (81 aa).

This sequence belongs to the universal ribosomal protein uS17 family. Part of the 30S ribosomal subunit.

In terms of biological role, one of the primary rRNA binding proteins, it binds specifically to the 5'-end of 16S ribosomal RNA. The protein is Small ribosomal subunit protein uS17 of Protochlamydia amoebophila (strain UWE25).